A 260-amino-acid polypeptide reads, in one-letter code: 3-alpha-(or 20-beta)-hydroxysteroid dehydrogenase (260 aa).

The NAD(+) site is built by R17, M19, D38, D61, V62, N88, Y153, K157, V186, T188, and T191. Y153 (proton acceptor) is an active-site residue.

This sequence belongs to the short-chain dehydrogenases/reductases (SDR) family. Homotetramer.

The catalysed reaction is androstan-3alpha,17beta-diol + NAD(+) = 17beta-hydroxyandrostanone + NADH + H(+). Its pathway is lipid metabolism; steroid degradation. Functionally, probably involved in steroid metabolism. The polypeptide is 3-alpha-(or 20-beta)-hydroxysteroid dehydrogenase (fabG3) (Mycobacterium bovis (strain ATCC BAA-935 / AF2122/97)).